The sequence spans 203 residues: CASP-like protein 4B2 (203 aa).

At 1–57 (MAMVTADASAAADAATKQPDVEKDYSSYNGASTAGAGGGGVVESVVARWRREDMLDK) the chain is on the cytoplasmic side. Residues 58-78 (CPLALHAAAAAFAFVALVLVA) form a helical membrane-spanning segment. Topologically, residues 79-92 (SNQHGDWMQFDRYQ) are extracellular. Residues 93–113 (EYMYLLAIAALAFAYSLAQAL) traverse the membrane as a helical segment. Topologically, residues 114–135 (RHAHRMRGGADPIPAPSARLFD) are cytoplasmic. Residues 136 to 156 (FIADQVVAYLLMSALSAAIPI) form a helical membrane-spanning segment. Residues 157–171 (TNRMRTAVINNFTDA) are Extracellular-facing. N167 carries an N-linked (GlcNAc...) asparagine glycan. The chain crosses the membrane as a helical span at residues 172–192 (TAAAISMAFLAFVALALSATV). Topologically, residues 193–203 (SGYKLSRQMYM) are cytoplasmic.

Belongs to the Casparian strip membrane proteins (CASP) family. In terms of assembly, homodimer and heterodimers.

The protein resides in the cell membrane. The sequence is that of CASP-like protein 4B2 from Hordeum vulgare subsp. vulgare (Domesticated barley).